The chain runs to 252 residues: Petrobactin import ATP-binding protein YclP (252 aa).

One can recognise an ABC transporter domain in the interval 2–236 (VEVRNVSKQY…SVLEEIYDMT (235 aa)). 34–41 (GPNGAGKS) contacts ATP.

It belongs to the ABC transporter superfamily. As to quaternary structure, the complex is composed of two ATP-binding proteins (YclP), two transmembrane proteins (YclN and YclO) and a solute-binding protein (YclQ).

It is found in the cell membrane. It catalyses the reaction a Fe(III)-siderophore(out) + ATP + H2O = a Fe(III)-siderophore(in) + ADP + phosphate + H(+). Part of the ABC transporter complex YclNOPQ involved in uptake of ferric-petrobactin. Petrobactin is a photoreactive 3,4-catecholate siderophore produced by many members of the B.cereus group, including B.anthracis. Probably responsible for energy coupling to the transport system. The sequence is that of Petrobactin import ATP-binding protein YclP (yclP) from Bacillus subtilis (strain 168).